Here is a 264-residue protein sequence, read N- to C-terminus: tRNA (guanine-N(1)-)-methyltransferase (264 aa).

S-adenosyl-L-methionine contacts are provided by residues Gly-116 and 136-141 (VGDFVL).

The protein belongs to the RNA methyltransferase TrmD family. In terms of assembly, homodimer.

The protein localises to the cytoplasm. The catalysed reaction is guanosine(37) in tRNA + S-adenosyl-L-methionine = N(1)-methylguanosine(37) in tRNA + S-adenosyl-L-homocysteine + H(+). Specifically methylates guanosine-37 in various tRNAs. The polypeptide is tRNA (guanine-N(1)-)-methyltransferase (Koribacter versatilis (strain Ellin345)).